A 652-amino-acid chain; its full sequence is Set1 complex component ash2 (652 aa).

A disordered region spans residues 1–32; it reads MLAHGSNDYGVSLKGNKTGSSPSKASSLNWNE. Polar residues predominate over residues 15 to 32; it reads GNKTGSSPSKASSLNWNE. Residues 40–94 form a PHD-type zinc finger; that stretch reads NTYCYCGKDRNLRFPDLQCSVCLNMFHLSCLSPPCTSMMGFSTNYQFVCKHCTED. Residues Cys43, Cys45, Cys58, Cys61, His66, Cys69, Cys88, and Cys91 each contribute to the Zn(2+) site. The segment at 234–270 is disordered; it reads RLVETETPPPSSSKLKEDYKDSKREMKRSNTPWSNAS. A compositionally biased stretch (basic and acidic residues) spans 247–261; that stretch reads KLKEDYKDSKREMKR. Positions 330-519 constitute a B30.2/SPRY domain; the sequence is EAAKDLPNVM…KHNRYIDLPY (190 aa).

This sequence belongs to the cclA family. Component of the Set1 complex composed of ash2, sdc1, set1, shg1, spp1, swd1, swd2 and swd3. Component of the Lid2 complex composed of ash2, jmj3, lid2, sdc1 and snt2.

The protein localises to the nucleus. Functionally, component of the COMPASS (Set1C) complex that specifically mono-, di- and trimethylates histone H3 to form H3K4me1/2/3, which subsequently plays a role in telomere length maintenance and transcription elongation regulation. Regulates MAPK pathway and sporulation through H3K4 methylation. The polypeptide is Set1 complex component ash2 (Schizosaccharomyces pombe (strain 972 / ATCC 24843) (Fission yeast)).